A 219-amino-acid chain; its full sequence is HTH-type transcriptional activator FasR (219 aa).

Residues 1 to 30 are disordered; that stretch reads MSDLANTAERRGEKRPAGGNRRGNRLPRDE. The region spanning 29–89 is the HTH tetR-type domain; that stretch reads DERRGQLLIA…AVLQRHVDNL (61 aa). The segment at residues 52–71 is a DNA-binding region (H-T-H motif); that stretch reads GMDEIADRAGVSKPVLYQHF.

As to quaternary structure, homodimer.

With respect to regulation, fasR:DNA binding is regulated by long-chain acyl-CoAs (C14- to C26-CoA), which act as effector molecules that modulate the affinity of FasR for its DNA binding sequences and therefore modulate the expression of the essential fas-acpS operon. Transcriptional activator that plays a central role in sensing mycobacterial long-chain fatty acids and regulating lipid biosynthesis. Activates the expression of the genes encoding the fatty acid synthase (fas) and the 4-phosphopantetheinyl transferase (acpS), whose products are involved in the fatty acid and mycolic acid biosynthesis. Specifically binds to three conserved operator sequences present in the fas-acpS promoter region. Essential for M.smegmatis viability. The chain is HTH-type transcriptional activator FasR from Mycolicibacterium smegmatis (strain ATCC 700084 / mc(2)155) (Mycobacterium smegmatis).